The chain runs to 103 residues: Sperm-associated antigen 11A (103 aa).

The first 24 residues, 1–24 (MRQRLLPSVTSLLLVALLFPGSSQ), serve as a signal peptide directing secretion. N-linked (GlcNAc...) asparagine glycosylation occurs at Asn29.

It belongs to the SPAG11 family.

Its subcellular location is the secreted. Functionally, has antimicrobial activity against E.coli. Plays a role in the defense response in the male reproductive tract, contributing to sperm maturation, storage and protection. This is Sperm-associated antigen 11A from Pan troglodytes (Chimpanzee).